The chain runs to 785 residues: uncharacterized protein (785 aa).

Residues 1–93 (MSWVMVSPEL…GGAYAAAEAA (93 aa)) enclose the PE domain.

It belongs to the mycobacterial PE family. PGRS subfamily.

This is an uncharacterized protein from Mycobacterium tuberculosis (strain CDC 1551 / Oshkosh).